The sequence spans 601 residues: Glutathione-regulated potassium-efflux system protein KefB (601 aa).

Transmembrane regions (helical) follow at residues 4–24 (SDFL…VPLA), 29–49 (IGAV…GLGF), 55–75 (EILH…GLEL), 87–107 (IFGV…GLLM), 115–135 (AAVV…LQLM), 152–172 (VLLF…LLAG), 177–197 (HFDW…LIGG), 207–227 (FIAA…LVLG), 230–250 (LFMD…GVLL), 268–288 (GLLL…GVLY), 291–311 (LLWV…VLYL), 324–344 (MQFA…FSTA), and 356–376 (ALLL…MKLV). An RCK N-terminal domain is found at 400–519 (KPQVIVVGFG…AGVTQFSRET (120 aa)).

It belongs to the monovalent cation:proton antiporter 2 (CPA2) transporter (TC 2.A.37) family. KefB subfamily. Interacts with the regulatory subunit KefG.

It is found in the cell inner membrane. Its function is as follows. Pore-forming subunit of a potassium efflux system that confers protection against electrophiles. Catalyzes K(+)/H(+) antiport. This chain is Glutathione-regulated potassium-efflux system protein KefB, found in Escherichia coli (strain SMS-3-5 / SECEC).